The primary structure comprises 231 residues: Equistatin (231 aa).

Residues 1-32 (MALSQNQAKFSKGFVVMIWVLFIACAITSTEA) form the signal peptide. 3 consecutive Thyroglobulin type-1 domains span residues 34-95 (LTKC…SPDC), 102-163 (LTLC…RPTC), and 167-231 (LSEC…RPTC). 9 disulfides stabilise this stretch: Cys37/Cys56, Cys67/Cys74, Cys76/Cys95, Cys105/Cys124, Cys135/Cys142, Cys144/Cys163, Cys170/Cys191, Cys202/Cys209, and Cys211/Cys231.

This sequence belongs to the protease inhibitor I31 family.

It localises to the secreted. Functionally, potent inhibitor of papain-like cysteine proteinases (Ki=0.18-0.57 nM on papain), as well as of the aspartic proteinase cathepsin D (Ki=0.3-05 nM). This chain is Equistatin, found in Actinia equina (Beadlet anemone).